Here is a 73-residue protein sequence, read N- to C-terminus: Mucroporin-like peptide (73 aa).

The N-terminal stretch at methionine 1–alanine 22 is a signal peptide. Lysine 38 bears the Lysine amide mark. The propeptide occupies glutamate 44–tyrosine 73.

It belongs to the non-disulfide-bridged peptide (NDBP) superfamily. Short antimicrobial peptide (group 4) family. In terms of tissue distribution, expressed by the venom gland.

The protein localises to the secreted. The protein resides in the target cell membrane. Cationic host defense peptide that have antibacterial activity by breaking membranes. Is more effective on Gram-positive than on Gram-negative bacteria. This Lychas mucronatus (Chinese swimming scorpion) protein is Mucroporin-like peptide.